The primary structure comprises 242 residues: Venom nerve growth factor 3 (242 aa).

An N-terminal signal peptide occupies residues 1–18; sequence MSMLCYTLIIAFLIGIWA. Residues 19 to 125 constitute a propeptide that is removed on maturation; the sequence is APKSEDNVPL…ALNRNIRSKR (107 aa). Positions 48 to 66 are enriched in basic and acidic residues; sequence LKTSRNTDQRHPAPKKAED. A disordered region spans residues 48-69; the sequence is LKTSRNTDQRHPAPKKAEDQEL. 3 disulfide bridges follow: Cys139/Cys203, Cys181/Cys231, and Cys191/Cys233. Asn147 carries N-linked (GlcNAc...) asparagine glycosylation.

It belongs to the NGF-beta family. Homodimer; non-covalently linked. In terms of tissue distribution, expressed by the venom gland.

Its subcellular location is the secreted. Its function is as follows. Nerve growth factor is important for the development and maintenance of the sympathetic and sensory nervous systems. It stimulates division and differentiation of sympathetic and embryonic sensory neurons as well as basal forebrain cholinergic neurons in the brain. Its relevance in the snake venom is not clear. However, it has been shown to inhibit metalloproteinase-dependent proteolysis of platelet glycoprotein Ib alpha, suggesting a metalloproteinase inhibition to prevent metalloprotease autodigestion and/or protection against prey proteases. Binds a lipid between the two protein chains in the homodimer. The lipid-bound form promotes histamine relase from mouse mast cells, contrary to the lipid-free form. In Demansia vestigiata (Lesser black whip snake), this protein is Venom nerve growth factor 3.